Consider the following 101-residue polypeptide: Nucleoid-associated protein Bind_0255 (101 aa).

It belongs to the YbaB/EbfC family. As to quaternary structure, homodimer.

It localises to the cytoplasm. It is found in the nucleoid. Its function is as follows. Binds to DNA and alters its conformation. May be involved in regulation of gene expression, nucleoid organization and DNA protection. The chain is Nucleoid-associated protein Bind_0255 from Beijerinckia indica subsp. indica (strain ATCC 9039 / DSM 1715 / NCIMB 8712).